The chain runs to 304 residues: Acetyl-coenzyme A carboxylase carboxyl transferase subunit beta (304 aa).

Residues 23–292 enclose the CoA carboxyltransferase N-terminal domain; sequence VWTKCDSCGQ…PNPDAPREGE (270 aa). Residues cysteine 27, cysteine 30, cysteine 46, and cysteine 49 each coordinate Zn(2+). Residues 27-49 form a C4-type zinc finger; the sequence is CDSCGQVLYRAELERNLEVCPKC. The tract at residues 281–304 is disordered; that stretch reads PAPNPDAPREGEVVPPVPDQEPEA. Over residues 295–304 the composition is skewed to pro residues; the sequence is PPVPDQEPEA.

The protein belongs to the AccD/PCCB family. As to quaternary structure, acetyl-CoA carboxylase is a heterohexamer composed of biotin carboxyl carrier protein (AccB), biotin carboxylase (AccC) and two subunits each of ACCase subunit alpha (AccA) and ACCase subunit beta (AccD). It depends on Zn(2+) as a cofactor.

Its subcellular location is the cytoplasm. It catalyses the reaction N(6)-carboxybiotinyl-L-lysyl-[protein] + acetyl-CoA = N(6)-biotinyl-L-lysyl-[protein] + malonyl-CoA. Its pathway is lipid metabolism; malonyl-CoA biosynthesis; malonyl-CoA from acetyl-CoA: step 1/1. Component of the acetyl coenzyme A carboxylase (ACC) complex. Biotin carboxylase (BC) catalyzes the carboxylation of biotin on its carrier protein (BCCP) and then the CO(2) group is transferred by the transcarboxylase to acetyl-CoA to form malonyl-CoA. This Citrobacter koseri (strain ATCC BAA-895 / CDC 4225-83 / SGSC4696) protein is Acetyl-coenzyme A carboxylase carboxyl transferase subunit beta.